The following is a 255-amino-acid chain: Major prion protein (255 aa).

An N-terminal signal peptide occupies residues Met1–Cys24. Positions Lys25–Tyr41 are interaction with ADGRG6. The segment at Lys25–Ala232 is interaction with GRB2, ERI3 and SYN1. The interval Pro28–Thr110 is disordered. 5 tandem repeats follow at residues Pro54–Gln62, Pro63–Gln70, Pro71–Gln78, Pro79–Gln86, and Pro87–Gly94. Residues Pro54–Gly94 are 5 X 8 AA tandem repeats of P-H-G-G-G-W-G-Q. The span at Gln55–Gly97 shows a compositional bias: gly residues. Cu(2+)-binding residues include His64, Gly65, Gly66, His72, Gly73, Gly74, His80, Gly81, Gly82, His88, Gly90, and Gly91. 3 N-linked (GlcNAc...) asparagine glycosylation sites follow: Asn174, Asn184, and Asn199. A disulfide bond links Cys182 and Cys216. A lipid anchor (GPI-anchor amidated alanine) is attached at Ala232. Positions Ser233–Gly255 are cleaved as a propeptide — removed in mature form.

The protein belongs to the prion family. As to quaternary structure, monomer and homodimer. Has a tendency to aggregate into amyloid fibrils containing a cross-beta spine, formed by a steric zipper of superposed beta-strands. Soluble oligomers may represent an intermediate stage on the path to fibril formation. Copper binding may promote oligomerization. Interacts with GRB2, APP, ERI3/PRNPIP and SYN1. Mislocalized cytosolically exposed PrP interacts with MGRN1; this interaction alters MGRN1 subcellular location and causes lysosomal enlargement. Interacts with APP. Interacts with KIAA1191. Interacts with ADGRG6.

Its subcellular location is the cell membrane. The protein localises to the golgi apparatus. Its function is as follows. Its primary physiological function is unclear. May play a role in neuronal development and synaptic plasticity. May be required for neuronal myelin sheath maintenance. May promote myelin homeostasis through acting as an agonist for ADGRG6 receptor. May play a role in iron uptake and iron homeostasis. Soluble oligomers are toxic to cultured neuroblastoma cells and induce apoptosis (in vitro). Association with GPC1 (via its heparan sulfate chains) targets PRNP to lipid rafts. Also provides Cu(2+) or Zn(2+) for the ascorbate-mediated GPC1 deaminase degradation of its heparan sulfate side chains. The protein is Major prion protein (PRNP) of Canis lupus familiaris (Dog).